Here is a 347-residue protein sequence, read N- to C-terminus: GMP reductase (347 aa).

108–131 is a binding site for NADP(+); it reads ADFQKTKDIMALTDDLIFICVDIA. K(+) contacts are provided by glycine 181 and glycine 183. Catalysis depends on cysteine 186, which acts as the Thioimidate intermediate. 216–239 contacts NADP(+); sequence IIGDGGCSCAGDVSKAFGGGADFV.

It belongs to the IMPDH/GMPR family. GuaC type 1 subfamily. Homotetramer.

The enzyme catalyses IMP + NH4(+) + NADP(+) = GMP + NADPH + 2 H(+). Catalyzes the irreversible NADPH-dependent deamination of GMP to IMP. It functions in the conversion of nucleobase, nucleoside and nucleotide derivatives of G to A nucleotides, and in maintaining the intracellular balance of A and G nucleotides. This Aliivibrio salmonicida (strain LFI1238) (Vibrio salmonicida (strain LFI1238)) protein is GMP reductase.